Here is a 246-residue protein sequence, read N- to C-terminus: NH(3)-dependent NAD(+) synthetase (246 aa).

29 to 36 (GLSGGIDS) serves as a coordination point for ATP. Aspartate 35 provides a ligand contact to Mg(2+). Arginine 110 provides a ligand contact to deamido-NAD(+). Threonine 130 lines the ATP pocket. Position 135 (glutamate 135) interacts with Mg(2+). ATP-binding residues include lysine 159 and serine 181.

This sequence belongs to the NAD synthetase family. As to quaternary structure, homodimer.

It carries out the reaction deamido-NAD(+) + NH4(+) + ATP = AMP + diphosphate + NAD(+) + H(+). It functions in the pathway cofactor biosynthesis; NAD(+) biosynthesis; NAD(+) from deamido-NAD(+) (ammonia route): step 1/1. Its function is as follows. Catalyzes the ATP-dependent amidation of deamido-NAD to form NAD. Uses ammonia as a nitrogen source. This Campylobacter jejuni subsp. jejuni serotype O:2 (strain ATCC 700819 / NCTC 11168) protein is NH(3)-dependent NAD(+) synthetase.